The following is a 101-amino-acid chain: MDKSKRLFLKPKRSLRRRLPPIGSGDRIDYRNMSLISRFISEQGKILSRRVNRLTLKQQRLITIAIKQARILSSLPFLNNERQFEKNELVARTTGLRTRKK.

It belongs to the bacterial ribosomal protein bS18 family. As to quaternary structure, part of the 30S ribosomal subunit.

The protein resides in the plastid. It is found in the chloroplast. This chain is Small ribosomal subunit protein bS18c, found in Populus alba (White poplar).